Here is a 78-residue protein sequence, read N- to C-terminus: Myrmicitoxin-Ta2a (78 aa).

The signal sequence occupies residues 1 to 26 (MKLSFLSLALAIIFVTVLIYAPQAEA). A propeptide spanning residues 27–56 (KALADAVADADADADAAADAVADALADADA) is cleaved from the precursor. K77 is modified (lysine amide).

This sequence belongs to the formicidae venom precursor-01 superfamily. As to expression, expressed by the venom gland.

It is found in the secreted. In terms of biological role, peptide with toxicity towards insects that may also act as antimicrobial peptide. Causes calcium influx in F11 cells (EC(50)=5.8 nM), possibly by modulating sodium channels (Nav). In vivo, is lethal to insects, but does not show toxicity to vertebrates. Intraplantar injection into mice does not induce spontaneous nocifensive behaviors up to a dose of 200 pmol. The polypeptide is Myrmicitoxin-Ta2a (Tetramorium africanum (Fierce ant)).